Reading from the N-terminus, the 208-residue chain is MKGLFVTIEGPEGSGKSTLITKLLPYFENKGQKVIATREPGGIAISEEIRTILHKKEYTTMEARTEALLYAAARRQHLVEKVMPALEADQLVLCDRFIDSSLAYQGYARGLGIDKVYEMNRFATEDCMPSLTIYLDIAPEVGLARIEKDAAREVNRLDMESIAFHRLVREGYLQIVERFKDRIVVVNADQPMENVVEEVIQLIESKLL.

10-17 (GPEGSGKS) is a binding site for ATP.

The protein belongs to the thymidylate kinase family.

The enzyme catalyses dTMP + ATP = dTDP + ADP. Functionally, phosphorylation of dTMP to form dTDP in both de novo and salvage pathways of dTTP synthesis. The chain is Thymidylate kinase from Bacillus cytotoxicus (strain DSM 22905 / CIP 110041 / 391-98 / NVH 391-98).